Consider the following 81-residue polypeptide: RNA-binding protein Hfq (81 aa).

The region spanning 10–69 is the Sm domain; that stretch reads DPFLNTLRKEHVPVSIYLVNGIKLQGQVDSFDQYVILLKNTVTQMVYKHAISTIVPGRAV.

Belongs to the Hfq family. In terms of assembly, homohexamer.

RNA chaperone that binds small regulatory RNA (sRNAs) and mRNAs to facilitate mRNA translational regulation in response to envelope stress, environmental stress and changes in metabolite concentrations. Also binds with high specificity to tRNAs. In Methylobacillus flagellatus (strain ATCC 51484 / DSM 6875 / VKM B-1610 / KT), this protein is RNA-binding protein Hfq.